Reading from the N-terminus, the 90-residue chain is MARMVQCIKLGKEAEGLDFPPYPGELGKRLWENVSKEAWAAWLKQQTMLVNENRLNLADLRARQYLARQMEKHFFGEGADVAQGYVPPSN.

This sequence belongs to the Fe(2+)-trafficking protein family.

In terms of biological role, could be a mediator in iron transactions between iron acquisition and iron-requiring processes, such as synthesis and/or repair of Fe-S clusters in biosynthetic enzymes. The chain is Probable Fe(2+)-trafficking protein from Variovorax paradoxus (strain S110).